The chain runs to 242 residues: Probable transcriptional regulatory protein STH1004 (242 aa).

This sequence belongs to the TACO1 family.

Its subcellular location is the cytoplasm. This chain is Probable transcriptional regulatory protein STH1004, found in Symbiobacterium thermophilum (strain DSM 24528 / JCM 14929 / IAM 14863 / T).